A 139-amino-acid chain; its full sequence is Type II methyltransferase M.AquIB (139 aa).

Residues 1-135 (MDIKNVHIKN…KAVSEQLLDV (135 aa)) enclose the SAM-dependent MTase C5-type domain. The tract at residues 38–58 (KTFGSTYRRLDPNQPSPTVTR) is disordered.

The protein belongs to the class I-like SAM-binding methyltransferase superfamily. C5-methyltransferase family. As to quaternary structure, heterodimer of an alpha and a beta subunit.

It carries out the reaction a 2'-deoxycytidine in DNA + S-adenosyl-L-methionine = a 5-methyl-2'-deoxycytidine in DNA + S-adenosyl-L-homocysteine + H(+). Functionally, a methylase, recognizes the double-stranded sequence 5'-CYCGRG-3', methylates C-1 on both strands, and protects the DNA from cleavage by the AquI endonuclease. This is Type II methyltransferase M.AquIB (aquIMB) from Picosynechococcus sp. (strain ATCC 27264 / PCC 7002 / PR-6) (Agmenellum quadruplicatum).